A 341-amino-acid polypeptide reads, in one-letter code: MNTLVNILFILVPLLLSVAYLTYFERKVLAAIQLRHGPSVVGPFGLLQPFADAIKLLIKEPIIPFRASTILFIMAPMLTFILALIAWAVIPFGAEVIVENGQQVIIPKVIANINVGVLYVLAISSLGVYGVIIAGWSSNSNYAFLGAIRSAAQMISYEVSIGLIVAAVVITTGTLNLGEMVVAKHNMPFWVDLLLMPIGIIFFISLLAETNRHPFDLPEAEAELVSGYNVEYSSMPFALFFLGEYANMILASAMMTIFFLGGWYPPLEFSLLYKIPGLIWFVLKIVILLFIFIWIRATIPRYRYDQLMRLGWKVFLPISVLWVILISGVLLFTGNLPGSNV.

9 helical membrane-spanning segments follow: residues 4–24 (LVNILFILVPLLLSVAYLTYF), 38–58 (PSVVGPFGLLQPFADAIKLLI), 70–90 (ILFIMAPMLTFILALIAWAVI), 115–135 (VGVLYVLAISSLGVYGVIIAG), 161–181 (IGLIVAAVVITTGTLNLGEMV), 187–207 (MPFWVDLLLMPIGIIFFISLL), 239–259 (LFFLGEYANMILASAMMTIFF), 275–295 (IPGLIWFVLKIVILLFIFIWI), and 314–334 (VFLPISVLWVILISGVLLFTG).

The protein belongs to the complex I subunit 1 family. NDH-1 is composed of 14 different subunits. Subunits NuoA, H, J, K, L, M, N constitute the membrane sector of the complex.

It is found in the cell membrane. The catalysed reaction is a quinone + NADH + 5 H(+)(in) = a quinol + NAD(+) + 4 H(+)(out). Functionally, NDH-1 shuttles electrons from NADH, via FMN and iron-sulfur (Fe-S) centers, to quinones in the respiratory chain. The immediate electron acceptor for the enzyme in this species is believed to be ubiquinone. Couples the redox reaction to proton translocation (for every two electrons transferred, four hydrogen ions are translocated across the cytoplasmic membrane), and thus conserves the redox energy in a proton gradient. This subunit may bind ubiquinone. In Wolbachia pipientis wMel, this protein is NADH-quinone oxidoreductase subunit H.